Reading from the N-terminus, the 560-residue chain is Endogenous retrovirus group K member 18 Env polyprotein (560 aa).

The segment at 355-375 is fusion peptide; that stretch reads FIFTLIAVIMGLIAVTATAAV. The chain crosses the membrane as a helical span at residues 522–542; that stretch reads IRSTMIINLILIVVCLFCLLL.

This sequence belongs to the beta type-B retroviral envelope protein family. HERV class-II K(HML-2) env subfamily. The surface (SU) and transmembrane (TM) proteins form a heterodimer. SU and TM are attached by noncovalent interactions or by a labile interchain disulfide bond. Specific enzymatic cleavages in vivo yield the mature SU and TM proteins. As to expression, expressed at higher level in the thymus. Expressed at lower level in peripheral blood lymphocytes.

It localises to the cell membrane. Its subcellular location is the virion. Functionally, retroviral envelope proteins mediate receptor recognition and membrane fusion during early infection. Endogenous envelope proteins may have kept, lost or modified their original function during evolution. This envelope protein has superantigenic properties. SU mediates receptor recognition. In terms of biological role, TM anchors the envelope heterodimer to the viral membrane through one transmembrane domain. The other hydrophobic domain, called fusion peptide, mediates fusion of the viral membrane with the target cell membrane. The polypeptide is Endogenous retrovirus group K member 18 Env polyprotein (ERVK-18) (Homo sapiens (Human)).